The sequence spans 463 residues: Retinoic acid receptor RXR-gamma (463 aa).

The tract at residues 1-138 is modulating; it reads MYGNYSHFMK…TSPGSLVKHI (138 aa). The segment at 17–53 is disordered; the sequence is GSPGHSGSTSMSPSAALSTGKPMDSHPSYTDTPVSAP. A compositionally biased stretch (polar residues) spans 21 to 33; that stretch reads HSGSTSMSPSAAL. NR C4-type zinc fingers lie at residues 139–159 and 175–199; these read CAIC…CEGC and CRDN…YQKC. The segment at residues 139-204 is a DNA-binding region (nuclear receptor); the sequence is CAICGDRSSG…RYQKCLVMGM (66 aa). Residues 205-230 are hinge; sequence KREAVQEERQRSRERAESEAECASSG. Residues 211–222 are compositionally biased toward basic and acidic residues; the sequence is EERQRSRERAES. The tract at residues 211–232 is disordered; sequence EERQRSRERAESEAECASSGHE. One can recognise an NR LBD domain in the interval 231–459; the sequence is HEDMPVERIL…TFLMEMLETP (229 aa).

The protein belongs to the nuclear hormone receptor family. NR2 subfamily. Homodimer. Heterodimer with a RAR molecule. Binds DNA preferentially as a RAR/RXR heterodimer. Interacts with RARA. Post-translationally, acetylated by EP300.

Its subcellular location is the nucleus. The protein localises to the cytoplasm. Receptor for retinoic acid. Retinoic acid receptors bind as heterodimers to their target response elements in response to their ligands, all-trans or 9-cis retinoic acid, and regulate gene expression in various biological processes. The RAR/RXR heterodimers bind to the retinoic acid response elements (RARE) composed of tandem 5'-AGGTCA-3' sites known as DR1-DR5. The high affinity ligand for RXRs is 9-cis retinoic acid. The chain is Retinoic acid receptor RXR-gamma (RXRG) from Sus scrofa (Pig).